The primary structure comprises 517 residues: 2,3-bisphosphoglycerate-independent phosphoglycerate mutase (517 aa).

Mn(2+) is bound by residues D14 and S64. The active-site Phosphoserine intermediate is the S64. Substrate-binding positions include H125, 155–156 (RD), R187, R193, 263–266 (RSDR), and K337. Mn(2+)-binding residues include D404, H408, D445, H446, and H464.

The protein belongs to the BPG-independent phosphoglycerate mutase family. Monomer. Requires Mn(2+) as cofactor.

The enzyme catalyses (2R)-2-phosphoglycerate = (2R)-3-phosphoglycerate. The protein operates within carbohydrate degradation; glycolysis; pyruvate from D-glyceraldehyde 3-phosphate: step 3/5. Catalyzes the interconversion of 2-phosphoglycerate and 3-phosphoglycerate. The polypeptide is 2,3-bisphosphoglycerate-independent phosphoglycerate mutase (Nitrosococcus oceani (strain ATCC 19707 / BCRC 17464 / JCM 30415 / NCIMB 11848 / C-107)).